The sequence spans 209 residues: Holliday junction branch migration complex subunit RuvA (209 aa).

Positions 1–70 (MINYLKGKTT…EDQQILYGFS (70 aa)) are domain I. Residues 71–149 (TDSERDLFRQ…QWEQAIALKT (79 aa)) form a domain II region. The flexible linker stretch occupies residues 150–160 (PVSVGVPSREI). A domain III region spans residues 160 to 209 (ILEEVEMTLLALGYTDEEIDQAISAISQDNLLLKNPHVEEWLKSAIAWLS).

The protein belongs to the RuvA family. As to quaternary structure, homotetramer. Forms an RuvA(8)-RuvB(12)-Holliday junction (HJ) complex. HJ DNA is sandwiched between 2 RuvA tetramers; dsDNA enters through RuvA and exits via RuvB. An RuvB hexamer assembles on each DNA strand where it exits the tetramer. Each RuvB hexamer is contacted by two RuvA subunits (via domain III) on 2 adjacent RuvB subunits; this complex drives branch migration. In the full resolvosome a probable DNA-RuvA(4)-RuvB(12)-RuvC(2) complex forms which resolves the HJ.

It is found in the cytoplasm. The RuvA-RuvB-RuvC complex processes Holliday junction (HJ) DNA during genetic recombination and DNA repair, while the RuvA-RuvB complex plays an important role in the rescue of blocked DNA replication forks via replication fork reversal (RFR). RuvA specifically binds to HJ cruciform DNA, conferring on it an open structure. The RuvB hexamer acts as an ATP-dependent pump, pulling dsDNA into and through the RuvAB complex. HJ branch migration allows RuvC to scan DNA until it finds its consensus sequence, where it cleaves and resolves the cruciform DNA. This is Holliday junction branch migration complex subunit RuvA from Gloeothece citriformis (strain PCC 7424) (Cyanothece sp. (strain PCC 7424)).